Consider the following 307-residue polypeptide: Coproporphyrin III ferrochelatase (307 aa).

Residues Y12, R29, 45–46 (RY), S53, and Y124 each bind Fe-coproporphyrin III. Fe(2+) contacts are provided by H181 and E263.

This sequence belongs to the ferrochelatase family.

The protein resides in the cytoplasm. The catalysed reaction is Fe-coproporphyrin III + 2 H(+) = coproporphyrin III + Fe(2+). Its pathway is porphyrin-containing compound metabolism; protoheme biosynthesis. Involved in coproporphyrin-dependent heme b biosynthesis. Catalyzes the insertion of ferrous iron into coproporphyrin III to form Fe-coproporphyrin III. The sequence is that of Coproporphyrin III ferrochelatase from Staphylococcus epidermidis (strain ATCC 12228 / FDA PCI 1200).